A 359-amino-acid chain; its full sequence is Protein disulfide-isomerase tigA (359 aa).

A signal peptide spans 1-19; the sequence is MVRLSNLVSCLGLASAVTA. 2 Thioredoxin domains span residues 20–129 and 131–250; these read AVVD…EKTG and KPRG…EKTG. Catalysis depends on nucleophile residues Cys-49, Cys-52, Cys-169, and Cys-172. 2 disulfide bridges follow: Cys-49-Cys-52 and Cys-169-Cys-172. A Prevents secretion from ER motif is present at residues 356–359; it reads KDEL.

Belongs to the protein disulfide isomerase family.

The protein resides in the endoplasmic reticulum lumen. The catalysed reaction is Catalyzes the rearrangement of -S-S- bonds in proteins.. In Aspergillus niger, this protein is Protein disulfide-isomerase tigA (tigA).